The sequence spans 339 residues: Glycerol-3-phosphate dehydrogenase [NAD(P)+] (339 aa).

Positions 13, 14, and 108 each coordinate NADPH. Residues K108, G139, and S141 each coordinate sn-glycerol 3-phosphate. Position 143 (A143) interacts with NADPH. Residues K194, D247, S257, R258, and N259 each coordinate sn-glycerol 3-phosphate. K194 (proton acceptor) is an active-site residue. NADPH is bound at residue R258. The NADPH site is built by V282 and E284.

The protein belongs to the NAD-dependent glycerol-3-phosphate dehydrogenase family.

It is found in the cytoplasm. The enzyme catalyses sn-glycerol 3-phosphate + NAD(+) = dihydroxyacetone phosphate + NADH + H(+). It catalyses the reaction sn-glycerol 3-phosphate + NADP(+) = dihydroxyacetone phosphate + NADPH + H(+). The protein operates within membrane lipid metabolism; glycerophospholipid metabolism. Its function is as follows. Catalyzes the reduction of the glycolytic intermediate dihydroxyacetone phosphate (DHAP) to sn-glycerol 3-phosphate (G3P), the key precursor for phospholipid synthesis. The polypeptide is Glycerol-3-phosphate dehydrogenase [NAD(P)+] (Streptococcus mutans serotype c (strain ATCC 700610 / UA159)).